A 1193-amino-acid polypeptide reads, in one-letter code: Stress response protein nst1 (1193 aa).

Disordered stretches follow at residues 1 to 197 (MVPA…SHNI), 288 to 368 (QGSF…TRAA), 422 to 468 (ESLH…EQRM), 508 to 815 (MEEE…MVAR), 857 to 942 (MPPG…TQRD), 966 to 988 (TLSQ…RASF), and 1145 to 1193 (DNNS…PMGF). Low complexity predominate over residues 10–29 (SPSSTMLNSSSTTAHAAPST). A compositionally biased stretch (basic residues) spans 53–63 (NRKKQKRRQKQ). Residues 64 to 73 (AARLAERQLA) are compositionally biased toward low complexity. Positions 76–90 (HVSTDDTTQNGSSHA) are enriched in polar residues. Over residues 91–128 (NPERYHSDDGGADGPDHEQPTNGDVYDKDGQDSMDAHV) the composition is skewed to basic and acidic residues. Over residues 129-140 (DSQNPQGPNGTE) the composition is skewed to polar residues. The segment covering 146-160 (TGRKSKKKKGKKARN) has biased composition (basic residues). Over residues 169–182 (TSTPMSTPSVSMSH) the composition is skewed to low complexity. Positions 312–321 (GQHTRTQGQF) are enriched in polar residues. Composition is skewed to acidic residues over residues 332 to 364 (TEED…EDEE) and 434 to 463 (DDED…DAMT). Residues 448–659 (SQEEEDYEED…EEQAKKDTAK (212 aa)) adopt a coiled-coil conformation. Composition is skewed to basic and acidic residues over residues 508 to 527 (MEEE…EAQK) and 537 to 675 (QAKE…DQAK). Positions 722–740 (RQPSQQDSHSSSPHSQAPS) are enriched in low complexity. The span at 741–769 (TDPSQASLSPRSMPVSQSSGVASGNSQQG) shows a compositional bias: polar residues. Over residues 914-926 (PISRPSPIKRPSS) the composition is skewed to low complexity. A compositionally biased stretch (basic and acidic residues) spans 933 to 942 (KGGDRTTQRD). The span at 972-986 (PGATAPGTFPGPARA) shows a compositional bias: low complexity. Residues 1182 to 1193 (VLRQYSSPPMGF) show a composition bias toward polar residues.

Belongs to the NST1 family.

Its subcellular location is the cytoplasm. Functionally, may act as a negative regulator of salt tolerance. This chain is Stress response protein nst1 (nst1), found in Neosartorya fischeri (strain ATCC 1020 / DSM 3700 / CBS 544.65 / FGSC A1164 / JCM 1740 / NRRL 181 / WB 181) (Aspergillus fischerianus).